A 286-amino-acid polypeptide reads, in one-letter code: Meteorin-like protein (286 aa).

Residues 1–20 form the signal peptide; the sequence is MLRRGLLSFFMVILIDRGTS. Intrachain disulfides connect C28/C51, C84/C120, C165/C235, C168/C259, and C178/C281. An N-linked (GlcNAc...) asparagine glycan is attached at N203.

Belongs to the meteorin family.

Its subcellular location is the secreted. In terms of biological role, hormone induced following exercise or cold exposure that promotes energy expenditure. Induced either in the skeletal muscle after exercise or in adipose tissue following cold exposure and is present in the circulation. Able to stimulate energy expenditure associated with the browning of the white fat depots and improves glucose tolerance. The polypeptide is Meteorin-like protein (metrnl) (Xenopus laevis (African clawed frog)).